The primary structure comprises 451 residues: Mannan endo-1,6-alpha-mannosidase DCW1 (451 aa).

The first 21 residues, 1–21, serve as a signal peptide directing secretion; that stretch reads MLAVTFTAAAVLSLLAASGRT. N-linked (GlcNAc...) asparagine glycans are attached at residues Asn-84, Asn-109, Asn-203, Asn-242, Asn-267, and Asn-291. Residues 397–419 form a disordered region; that stretch reads AMNGGTSPGDPAAGTKTKAENLP. Asp-427 carries the GPI-anchor amidated aspartate lipid modification. Positions 428–451 are cleaved as a propeptide — removed in mature form; that stretch reads RAGAGIITALIGSSFLACTLWLII.

Belongs to the glycosyl hydrolase 76 family.

The protein localises to the secreted. Its subcellular location is the cell wall. The protein resides in the cell membrane. The catalysed reaction is Random hydrolysis of (1-&gt;6)-alpha-D-mannosidic linkages in unbranched (1-&gt;6)-mannans.. In terms of biological role, required for normal synthesis of the cell wall. This Eremothecium gossypii (strain ATCC 10895 / CBS 109.51 / FGSC 9923 / NRRL Y-1056) (Yeast) protein is Mannan endo-1,6-alpha-mannosidase DCW1 (DCW1).